We begin with the raw amino-acid sequence, 356 residues long: MSLPTTSSPLTNDQEFAKPVRNGKIFENPKSFTNWGGRPGLTNIFKLVLRETSHENLPSDKKVLDSTLPVHNITADDFHSESGLFATWLGHATVLVDLEGVKFVTDPVWADRASFTSFAGPKRYRPPPMKLEDLPDLDFAVVSHDHYDHLDADAVKRITNLNPQIKWFVPLGLKKWMKNQGIGADGSNTVTELNWGESSEFVKNGKTITIWCLPAQHSGQRGLSDHNHRLWSGWAVIGENRRFYFPGDTGFCDVEFKKIGEKLGPFDLAAIPIGAYEPRWFMKSHHINPDEAVEVHKLVRARNSIGIHWGTYPMGTTEYYLEPRDKLKELMDAREDLKDTSFVTVDMGEIWEASDR.

His-144 and His-146 together coordinate Zn(2+). Tyr-147 is a binding site for an N-acyl-1,2-diacyl-sn-glycero-3-phosphoethanolamine. Zn(2+) is bound by residues Asp-148, His-149, His-217, and Asp-248. Residue His-286 participates in an N-acyl-1,2-diacyl-sn-glycero-3-phosphoethanolamine binding. Residue His-308 coordinates Zn(2+).

The protein belongs to the NAPE-PLD family. It depends on Zn(2+) as a cofactor. In terms of tissue distribution, expressed in interneurons that are in close proximity to the primary sensory neurons. Predominantly expressed in the pharynx but can also be found in cell bodies of the dorsal and ventral nerve cords.

The enzyme catalyses an N-acyl-1,2-diacyl-sn-glycero-3-phosphoethanolamine + H2O = an N-acylethanolamine + a 1,2-diacyl-sn-glycero-3-phosphate + H(+). It carries out the reaction 1,2-dihexadecanoyl-sn-glycero-3-phospho-(N-hexadecanoyl)-ethanolamine + H2O = 1,2-dihexadecanoyl-sn-glycero-3-phosphate + N-hexadecanoylethanolamine + H(+). The catalysed reaction is N-(5Z,8Z,11Z,14Z-eicosatetraenoyl)-1,2-di-(9Z-octadecenoyl)-sn-glycero-3-phosphoethanolamine + H2O = N-(5Z,8Z,11Z,14Z-eicosatetraenoyl)-ethanolamine + 1,2-di-(9Z-octadecenoyl)-sn-glycero-3-phosphate + H(+). In terms of biological role, D-type phospholipase that hydrolyzes N-acyl-phosphatidylethanolamines (NAPEs) to produce bioactive N-acylethanolamines/fatty acid ethanolamides (NAEs/FAEs) and phosphatidic acid. NAEs are bioactive lipids that are involved in diverse physiological processes such as growth and lifespan. This is N-acyl-phosphatidylethanolamine-hydrolyzing phospholipase D 1 from Caenorhabditis elegans.